Reading from the N-terminus, the 184-residue chain is Envelope protein 169 (184 aa).

Residues 1-6 (MKKYIK) are Intravirion-facing. The chain crosses the membrane as a helical span at residues 7–27 (MYLVLLIAIILFITILVIFLI). The Virion surface segment spans residues 28–184 (SGLFYPEQNP…TVMAIPRKVL (157 aa)).

This sequence belongs to the asfivirus envelope protein p22 family.

It localises to the virion membrane. The protein localises to the host cell membrane. This chain is Envelope protein 169, found in Ornithodoros (relapsing fever ticks).